A 219-amino-acid chain; its full sequence is 2-phospho-L-lactate guanylyltransferase (219 aa).

This sequence belongs to the CofC family. Homodimer.

The catalysed reaction is (2S)-2-phospholactate + GTP + H(+) = (2S)-lactyl-2-diphospho-5'-guanosine + diphosphate. It participates in cofactor biosynthesis; coenzyme F420 biosynthesis. Functionally, guanylyltransferase that catalyzes the activation of (2S)-2-phospholactate (2-PL) as (2S)-lactyl-2-diphospho-5'-guanosine, via the condensation of 2-PL with GTP. It is involved in the biosynthesis of coenzyme F420, a hydride carrier cofactor. The protein is 2-phospho-L-lactate guanylyltransferase of Methanocella arvoryzae (strain DSM 22066 / NBRC 105507 / MRE50).